The chain runs to 317 residues: Apolipoprotein E (317 aa).

A signal peptide spans 1–18 (MKVLWAALLVTFLAGCQA). 2 O-linked (GalNAc...) threonine glycosylation sites follow: threonine 26 and threonine 36. 8 consecutive repeat copies span residues 80 to 101 (ALMD…EQLT), 102 to 123 (PVAE…ARLG), 124 to 145 (ADME…AMLG), 146 to 167 (QSTE…KRLL), 168 to 189 (RDAD…EGAE), 190 to 211 (RGLS…VRAA), 212 to 233 (TVGS…ERLR), and 234 to 255 (ARME…EQVA). The interval 80–255 (ALMDETMKEL…RLDEVKEQVA (176 aa)) is 8 X 22 AA approximate tandem repeats. Lysine 93 carries N-linked (Glc) (glycation) lysine glycosylation. Methionine 143 carries the methionine sulfoxide modification. Serine 147 is modified (phosphoserine; by FAM20C). Residues 158 to 168 (HLRKLRKRLLR) are LDL and other lipoprotein receptors binding. 162 to 165 (LRKR) lines the heparin pocket. The tract at residues 210-290 (AATVGSLAGQ…SWFEPLVEDM (81 aa)) is lipid-binding and lipoprotein association. The O-linked (GalNAc...) threonine glycan is linked to threonine 212. 229–236 (GERLRARM) serves as a coordination point for heparin. The segment at 266–317 (QQIRLQAEAFQARLKSWFEPLVEDMQRQWAGLVEKVQAAVGTSAAPVPSDNH) is homooligomerization. Positions 278–290 (RLKSWFEPLVEDM) are specificity for association with VLDL. Threonine 307 carries O-linked (GalNAc...) threonine glycosylation. O-linked (GalNAc...) serine glycosylation is found at serine 308 and serine 314.

It belongs to the apolipoprotein A1/A4/E family. As to quaternary structure, homotetramer. May interact with ABCA1; functionally associated with ABCA1 in the biogenesis of HDLs. May interact with APP/A4 amyloid-beta peptide; the interaction is extremely stable in vitro but its physiological significance is unclear. May interact with MAPT. May interact with MAP2. In the cerebrospinal fluid, interacts with secreted SORL1. Interacts with PMEL; this allows the loading of PMEL luminal fragment on ILVs to induce fibril nucleation. (Microbial infection) Interacts with hepatitis C virus (HCV) envelope glycoprotein E2; this interaction is required for HCV infectivity and production. Post-translationally, APOE exists as multiple glycosylated and sialylated glycoforms within cells and in plasma. The extent of glycosylation and sialylation are tissue and context specific. Plasma APOE undergoes desialylation and is less glycosylated and sialylated than the cellular form. Glycosylation is not required for proper expression and secretion. O-glycosylated with core 1 or possibly core 8 glycans. Thr-307 and Ser-314 are minor glycosylation sites compared to Ser-308. Glycated in plasma VLDL of normal subjects, and of hyperglycemic diabetic patients at a higher level (2-3 fold). In terms of processing, phosphorylated by FAM20C in the extracellular medium. Post-translationally, undergoes C-terminal proteolytic processing in neurons. C-terminally truncated APOE has a tendency to form neurotoxic intracellular neurofibrillary tangle-like inclusions in neurons. Produced by several tissues and cell types and mainly found associated with lipid particles in the plasma, the interstitial fluid and lymph. Mainly synthesized by liver hepatocytes. Significant quantities are also produced in brain, mainly by astrocytes and glial cells in the cerebral cortex, but also by neurons in frontal cortex and hippocampus. It is also expressed by cells of the peripheral nervous system. Also expressed by adrenal gland, testis, ovary, skin, kidney, spleen and adipose tissue and macrophages in various tissues.

It localises to the secreted. Its subcellular location is the extracellular space. It is found in the extracellular matrix. The protein resides in the extracellular vesicle. The protein localises to the endosome. It localises to the multivesicular body. In terms of biological role, APOE is an apolipoprotein, a protein associating with lipid particles, that mainly functions in lipoprotein-mediated lipid transport between organs via the plasma and interstitial fluids. APOE is a core component of plasma lipoproteins and is involved in their production, conversion and clearance. Apolipoproteins are amphipathic molecules that interact both with lipids of the lipoprotein particle core and the aqueous environment of the plasma. As such, APOE associates with chylomicrons, chylomicron remnants, very low density lipoproteins (VLDL) and intermediate density lipoproteins (IDL) but shows a preferential binding to high-density lipoproteins (HDL). It also binds a wide range of cellular receptors including the LDL receptor/LDLR, the LDL receptor-related proteins LRP1, LRP2 and LRP8 and the very low-density lipoprotein receptor/VLDLR that mediate the cellular uptake of the APOE-containing lipoprotein particles. Finally, APOE also has a heparin-binding activity and binds heparan-sulfate proteoglycans on the surface of cells, a property that supports the capture and the receptor-mediated uptake of APOE-containing lipoproteins by cells. A main function of APOE is to mediate lipoprotein clearance through the uptake of chylomicrons, VLDLs, and HDLs by hepatocytes. APOE is also involved in the biosynthesis by the liver of VLDLs as well as their uptake by peripheral tissues ensuring the delivery of triglycerides and energy storage in muscle, heart and adipose tissues. By participating in the lipoprotein-mediated distribution of lipids among tissues, APOE plays a critical role in plasma and tissues lipid homeostasis. APOE is also involved in two steps of reverse cholesterol transport, the HDLs-mediated transport of cholesterol from peripheral tissues to the liver, and thereby plays an important role in cholesterol homeostasis. First, it is functionally associated with ABCA1 in the biogenesis of HDLs in tissues. Second, it is enriched in circulating HDLs and mediates their uptake by hepatocytes. APOE also plays an important role in lipid transport in the central nervous system, regulating neuron survival and sprouting. APOE is also involved in innate and adaptive immune responses, controlling for instance the survival of myeloid-derived suppressor cells. Binds to the immune cell receptor LILRB4. APOE may also play a role in transcription regulation through a receptor-dependent and cholesterol-independent mechanism, that activates MAP3K12 and a non-canonical MAPK signal transduction pathway that results in enhanced AP-1-mediated transcription of APP. Functionally, (Microbial infection) Through its interaction with HCV envelope glycoprotein E2, participates in the attachment of HCV to HSPGs and other receptors (LDLr, VLDLr, and SR-B1) on the cell surface and to the assembly, maturation and infectivity of HCV viral particles. This interaction is probably promoted via the up-regulation of cellular autophagy by the virus. This Homo sapiens (Human) protein is Apolipoprotein E.